Here is a 217-residue protein sequence, read N- to C-terminus: FMN-dependent NADH:quinone oxidoreductase (217 aa).

FMN is bound by residues Ser-10, 17–19 (SAS), and 137–140 (SRGG).

The protein belongs to the azoreductase type 1 family. Homodimer. It depends on FMN as a cofactor.

The enzyme catalyses 2 a quinone + NADH + H(+) = 2 a 1,4-benzosemiquinone + NAD(+). The catalysed reaction is N,N-dimethyl-1,4-phenylenediamine + anthranilate + 2 NAD(+) = 2-(4-dimethylaminophenyl)diazenylbenzoate + 2 NADH + 2 H(+). Quinone reductase that provides resistance to thiol-specific stress caused by electrophilic quinones. In terms of biological role, also exhibits azoreductase activity. Catalyzes the reductive cleavage of the azo bond in aromatic azo compounds to the corresponding amines. This chain is FMN-dependent NADH:quinone oxidoreductase, found in Streptomyces avermitilis (strain ATCC 31267 / DSM 46492 / JCM 5070 / NBRC 14893 / NCIMB 12804 / NRRL 8165 / MA-4680).